We begin with the raw amino-acid sequence, 602 residues long: Fumarate reductase flavoprotein subunit (602 aa).

Residues 12–16, 36–38, 44–52, 156–158, 192–193, and D212 each bind FAD; these read GAGGA, ISK, SHTVAAEGG, HFV, and AT. A Tele-8alpha-FAD histidine modification is found at H45. Active-site residues include H233 and R249. Residues 356–357, E380, and 391–397 contribute to the FAD site; these read HY and RLGSNSL. The disordered stretch occupies residues 581-602; that stretch reads YGGEADAADKAEAANKKEKANG. Positions 587–602 are enriched in basic and acidic residues; it reads AADKAEAANKKEKANG.

It belongs to the FAD-dependent oxidoreductase 2 family. FRD/SDH subfamily. Part of an enzyme complex containing four subunits: a flavoprotein (FrdA), an iron-sulfur protein (FrdB), and two hydrophobic anchor proteins (FrdC and FrdD). Can be cross-linked to SdhE. Purified from membrane fractions associated with protoporphyrinogen IX dehydrogenase (hemG). The cofactor is FAD.

The protein resides in the cell inner membrane. It carries out the reaction a quinone + succinate = fumarate + a quinol. The enzyme catalyses a menaquinone + succinate = a menaquinol + fumarate. Inhibited by oxaloacetate, a substrate analog. Two distinct, membrane-bound, FAD-containing enzymes are responsible for the catalysis of fumarate and succinate interconversion; fumarate reductase is used during anaerobic growth, and succinate dehydrogenase is used during aerobic growth. The QFR enzyme complex binds 2 quinones in or near the membrane; 1 near the [3Fe-4S] cluster (QP is proximal to the [3Fe-4S] cluster, on the cytoplasmic side of the membrane) while QD (the distal cluster) is on the other side of the membrane. It is not clear if both of the quinol-binding sites are functionally relevant. This is Fumarate reductase flavoprotein subunit (frdA) from Escherichia coli (strain K12).